A 252-amino-acid chain; its full sequence is tRNA (guanine-N(1)-)-methyltransferase (252 aa).

S-adenosyl-L-methionine is bound by residues Gly118 and 138–143 (IGDYVL).

It belongs to the RNA methyltransferase TrmD family. In terms of assembly, homodimer.

It is found in the cytoplasm. The catalysed reaction is guanosine(37) in tRNA + S-adenosyl-L-methionine = N(1)-methylguanosine(37) in tRNA + S-adenosyl-L-homocysteine + H(+). Functionally, specifically methylates guanosine-37 in various tRNAs. This is tRNA (guanine-N(1)-)-methyltransferase from Pseudomonas aeruginosa (strain UCBPP-PA14).